The chain runs to 155 residues: Deoxyuridine 5'-triphosphate nucleotidohydrolase (155 aa).

Residues 74–76 (RSG), Asn87, and 91–93 (LID) each bind substrate.

The protein belongs to the dUTPase family. Requires Mg(2+) as cofactor.

It catalyses the reaction dUTP + H2O = dUMP + diphosphate + H(+). Its pathway is pyrimidine metabolism; dUMP biosynthesis; dUMP from dCTP (dUTP route): step 2/2. Functionally, this enzyme is involved in nucleotide metabolism: it produces dUMP, the immediate precursor of thymidine nucleotides and it decreases the intracellular concentration of dUTP so that uracil cannot be incorporated into DNA. The polypeptide is Deoxyuridine 5'-triphosphate nucleotidohydrolase (Xylella fastidiosa (strain M23)).